The primary structure comprises 881 residues: MKKQFNRMKQLANQTVGRAEKTEVLSEDLLQIERRLDTVRSICHHSHKRLVACFQGQHGTDAERRHKKLPLTALAQNMQEASTQLEDSLLGKMLETCGDAENQLALELSQHEVFVEKEIVDPLYGIAEVEIPNIQKQRKQLARLVLDWDSVRARWNQAHKSSGTNFQGLPSKIDTLKEEMDEAGNKVEQCKDQLAADMYNFMAKEGEYGKFFVTLLEAQADYHRKALAVLEKTLPEMRAHQDKWAEKPAFGTPLEEHLKRSGREIALPIEACVMLLLETGMKEEGLFRIGAGASKLKKLKAALDCSTSHLDEFYSDPHAVAGALKSYLRELPEPLMTFNLYEEWTQVASVQDQDKKLQDLWRTCQKLPPQNFVNFRYLIKFLAKLAQTSDVNKMTPSNIAIVLGPNLLWARNEGTLAEMAAATSVHVVAVIEPIIQHADWFFPEEVEFNVSEAFVPLTTPSSNHSFHTGNDSDSGTLERKRPASMAVMEGDLVKKESFGVKLMDFQAHRRGGTLNRKHISPAFQPPLPPTDGSTVVPAGPEPPPQSSRAESSSGGGTVPSSAGILEQGPSPGDGSPPKPKDPVSAAVPAPGRNNSQIASGQNQPQAAAGSHQLSMGQPHNAAGPSPHTLRRAVKKPAPAPPKPGNPPPGHPGGQSSSGTSQHPPSLSPKPPTRSPSPPTQHTGQPPGQPSAPSQLSAPRRYSSSLSPIQAPNHPPPQPPTQATPLMHTKPNSQGPPNPMALPSEHGLEQPSHTPPQTPTPPSTPPLGKQNPSLPAPQTLAGGNPETAQPHAGTLPRPRPVPKPRNRPSVPPPPQPPGVHSAGDSSLTNTAPTASKIVTDSNSRVSEPHRSIFPEMHSDSASKDVPGRILLDIDNDTESTAL.

Positions 14–246 (QTVGRAEKTE…MRAHQDKWAE (233 aa)) constitute a BAR domain. The region spanning 252–442 (TPLEEHLKRS…PIIQHADWFF (191 aa)) is the Rho-GAP domain. The span at 459–475 (TPSSNHSFHTGNDSDSG) shows a compositional bias: polar residues. The disordered stretch occupies residues 459–482 (TPSSNHSFHTGNDSDSGTLERKRP). Residues S484 and S575 each carry the phosphoserine modification. The tract at residues 511-881 (GGTLNRKHIS…IDNDTESTAL (371 aa)) is disordered. Positions 592 to 617 (RNNSQIASGQNQPQAAAGSHQLSMGQ) are enriched in polar residues. A compositionally biased stretch (pro residues) spans 637 to 650 (APAPPKPGNPPPGH). Residues 653–664 (GQSSSGTSQHPP) are compositionally biased toward low complexity. A compositionally biased stretch (pro residues) spans 665 to 678 (SLSPKPPTRSPSPP). A phosphothreonine mark is found at T679 and T682. Positions 679-698 (TQHTGQPPGQPSAPSQLSAP) are enriched in low complexity. 2 positions are modified to phosphoserine: S702 and S704. Composition is skewed to pro residues over residues 712–721 (NHPPPQPPTQ), 752–764 (HTPP…PSTP), and 806–816 (RPSVPPPPQPP). Residues T753, T757, and T759 each carry the phosphothreonine modification. The SH3-binding motif lies at 753 to 766 (TPPQTPTPPSTPPL). S762 bears the Phosphoserine mark. T763 bears the Phosphothreonine mark. Residues 822–844 (GDSSLTNTAPTASKIVTDSNSRV) show a composition bias toward polar residues. Residues 845-865 (SEPHRSIFPEMHSDSASKDVP) show a composition bias toward basic and acidic residues. A compositionally biased stretch (acidic residues) spans 872-881 (IDNDTESTAL).

As to quaternary structure, component of a complex whose core is composed of ARHGAP17, AMOT, PALS1, PATJ and PARD3/PAR3. Interacts with NHERF1, FNBP1, TRIP10, CAPZA (CAPZA1, CAPZA2 or CAPZA3), CAPZB, CD2AP and SH3KBP1/CIN85. As to expression, ubiquitously expressed. Expressed at higher level in heart and placenta.

The protein resides in the membrane. Its subcellular location is the cytoplasm. The protein localises to the cell junction. It is found in the tight junction. Functionally, rho GTPase-activating protein involved in the maintenance of tight junction by regulating the activity of CDC42, thereby playing a central role in apical polarity of epithelial cells. Specifically acts as a GTPase activator for the CDC42 GTPase by converting it to an inactive GDP-bound state. The complex formed with AMOT acts by regulating the uptake of polarity proteins at tight junctions, possibly by deciding whether tight junction transmembrane proteins are recycled back to the plasma membrane or sent elsewhere. Participates in the Ca(2+)-dependent regulation of exocytosis, possibly by catalyzing GTPase activity of Rho family proteins and by inducing the reorganization of the cortical actin filaments. Acts as a GTPase activator in vitro for RAC1. The protein is Rho GTPase-activating protein 17 (ARHGAP17) of Homo sapiens (Human).